We begin with the raw amino-acid sequence, 486 residues long: Transcription enhancer factor-like protein egl-44 (486 aa).

The span at 47-57 shows a compositional bias: low complexity; it reads GTTTPTTTSGG. A disordered region spans residues 47–87; that stretch reads GTTTPTTTSGGQMMTLSPPAGDGPGSAGSMAPESTSSLSDL. Positions 88-164 form a DNA-binding region, TEA; sequence SGDAEGVWSI…QVLARKKLRD (77 aa). The tract at residues 165-188 is disordered; it reads EQAKKKGDIPSLLQQASPPGGVKS.

In terms of assembly, interacts (via N-terminus) with egl-46 (via C-terminus); the interaction is direct; the interaction may regulate transcription. Interacts with yap-1 (via WW domain); the interaction may regulate transcription. As to expression, expressed in HSN neurons in embryos and in the FLP neurons from the L1 stage through to adults. Not expressed in touch cells. Also expressed in larval hypodermis, intestine, pharyngeal muscle and other neurons. In adults expression is lost from some neurons, is weaker in the hypodermis but remains in the intestine. Expressed in HOB neuron, ray neurons RnA and RnB, and the ray structural cell, Rnst; rays are male-specific genital sensilla (simple sense organs).

It is found in the nucleus. In terms of biological role, transcription factor. Binds to DNA sequence motif 5'-CATNNNNAAATGCAT-3' as a heterodimer with egl-46. Represses expression of genes involved in differentiation of touch receptor neurons (TRN), probably acting as a heterodimer with egl-46, perhaps by occupying similar cis-regulatory elements as an unc-86/mec-3 heterodimer. Plays a role in cell fate specification of neurons, including the hook neuron HOB, and touch receptor neurons. Involved in male mating behavior, acting in concert with egl-46, via modulation of expression of polycystins lov-1 and pkd-2, homeodomain protein ceh-26, and neuropeptide-like protein nlp-8. Acts upstream of egl-46 to prevent touch cell differentiation in FLP neurons. Plays a role in neuron differentiation by repressing the expression of zag-1 in FLP neurons, probably acting as a heterodimer with egl-46; because zag-1 represses expression of egl-46 and egl-44, together these proteins form a bistable, negative-feedback loop that regulates the choice between neuronal fates. Also promotes HSN neuron development. In association with egl-46, regulates cell cycle exit in the neuronal Q cell lineage. Plays a role in specifying commissural dendrites of the PVD nociceptive neurons, acting in concert with egl-46. May be involved in thermal stress response downstream of yap-1. This Caenorhabditis elegans protein is Transcription enhancer factor-like protein egl-44 (egl-44).